Reading from the N-terminus, the 400-residue chain is Argininosuccinate synthase (400 aa).

ATP contacts are provided by residues 11-19 and Ala-38; that span reads AYSGGLDTS. Positions 89 and 94 each coordinate L-citrulline. Gly-119 provides a ligand contact to ATP. Thr-121, Asn-125, and Asp-126 together coordinate L-aspartate. Asn-125 is an L-citrulline binding site. L-citrulline-binding residues include Arg-129, Ser-178, Ser-187, Glu-263, and Tyr-275.

It belongs to the argininosuccinate synthase family. Type 1 subfamily. As to quaternary structure, homotetramer.

The protein localises to the cytoplasm. The catalysed reaction is L-citrulline + L-aspartate + ATP = 2-(N(omega)-L-arginino)succinate + AMP + diphosphate + H(+). The protein operates within amino-acid biosynthesis; L-arginine biosynthesis; L-arginine from L-ornithine and carbamoyl phosphate: step 2/3. This is Argininosuccinate synthase from Desulfatibacillum aliphaticivorans.